The sequence spans 107 residues: Ig kappa chain V-VI region XRPC 44 (107 aa).

The segment at 1–23 is framework-1; it reads EIVLTQSPAITAASLGQKVTITC. A disulfide bridge connects residues Cys-23 and Cys-87. A complementarity-determining-1 region spans residues 24–33; sequence SASSSVSYMH. The segment at 34–48 is framework-2; it reads WYQQKSGTSPKPWIY. Positions 49–55 are complementarity-determining-2; sequence EISKLAS. The tract at residues 56-87 is framework-3; sequence GVPARFSGSGSGTSYSLTISSMEAEDAAIYYC. Positions 88 to 96 are complementarity-determining-3; sequence QQWNYPLWT. Positions 97–106 are framework-4; that stretch reads FGGGTKLEIK.

The polypeptide is Ig kappa chain V-VI region XRPC 44 (Mus musculus (Mouse)).